The following is a 732-amino-acid chain: MDFLSGAFHYSDSVNPSKYSPRPSDYFGTLPFRTSRFEREAADVTADYLRKWQKAVKADNPERKDLVFHGSTTTLGHFVSWAYPECIPDRVDLCTQICDFGFYWDDVTDSVNVQENAEITQDLALALLSELTLGQRLEPKLEINKIVVQMLWGVLDKDRKSGLEMIKFWKGHLDGQAESAHNNMSFEEYTKHRLSEVGARWAVEVGCWSLGINLSREKKDSVAHFVNKGLLAAALMNDYYSFNKEFDEHQRAGSMDRLQNGLGILMREYGYTETEARSILREEIRKGERAIMDGYIAWRESADSSSESHELNRYIVMIILMIGGITFWSSHASRYHRDDLITTAGDRAMIVGKFQCSMRLLDGYPPPNRWKSATSSNDISGRKRKSWSDSNGVDTHGACYTNGSSNRAKRNGTEAGHKANGHDSMDIYTAPFLKAPSEVCEAPYEYINSLQGKNMRNKFMDALNHWLCVPAPSMQIIKNIVQMLHNSSLMLDDIEDESPLRRGQPVAHTFYGISQTINSANFVYVKSVKETSRLKNPICMEIFTDELSNLHTGQSLDLYWRYHGRCPSINEYIMMVDNKTGGLFRLMLRLMEAESPAASSASLVKLLTLTGRYYQIRDDYLNLTSVEYTSKKGFCEDLDEGKFSLPLLHLLNHTRHPDRITAPLFNRASGARSLAREVKVHIIQAMDEAGTFEYAQGVLKYLHEEIMRTLDEVEADLGRNTEARILLLGLGL.

Residues 1-342 (MDFLSGAFHY…SRYHRDDLIT (342 aa)) are terpene cyclase. Mg(2+)-binding residues include D105 and D109. Substrate is bound by residues D105, D109, 193 to 196 (RLSE), 242 to 246 (FNKEF), and 334 to 335 (RY). The DDXXD 1 motif lies at 105 to 109 (DDVTD). Positions 238–246 (DYYSFNKEF) match the NSE/DTE motif. The segment at 343–732 (TAGDRAMIVG…ARILLLGLGL (390 aa)) is prenyltransferase. Disordered regions lie at residues 371 to 390 (KSATSSNDISGRKRKSWSDS) and 398 to 420 (ACYTNGSSNRAKRNGTEAGHKAN). The span at 411-420 (NGTEAGHKAN) shows a compositional bias: basic and acidic residues. Isopentenyl diphosphate is bound by residues K453, R456, and H485. Mg(2+)-binding residues include D492 and D496. The DDXXD 2 motif lies at 492–496 (DDIED). Residue R501 participates in dimethylallyl diphosphate binding. R502 contacts isopentenyl diphosphate. Positions 579, 580, 615, 622, 632, and 642 each coordinate dimethylallyl diphosphate.

This sequence in the N-terminal section; belongs to the terpene synthase family. It in the C-terminal section; belongs to the FPP/GGPP synthase family. In terms of assembly, hexamer. Mg(2+) serves as cofactor.

It carries out the reaction isopentenyl diphosphate + (2E,6E)-farnesyl diphosphate = (2E,6E,10E)-geranylgeranyl diphosphate + diphosphate. The enzyme catalyses isopentenyl diphosphate + (2E,6E,10E)-geranylgeranyl diphosphate = (2E,6E,10E,14E)-geranylfarnesyl diphosphate + diphosphate. Its pathway is secondary metabolite biosynthesis; terpenoid biosynthesis. In terms of biological role, bifunctional sesterterpene synthase that possesses both prenyl transferase and terpene cyclase activity, converting isopentenyl diphosphate and dimethylallyl diphosphate into geranylfarnesyl diphosphate (GFPP) and further converting GFPP into sesterbrasiliatriene. The polypeptide is Sesterbrasiliatriene synthase PbSS (PbSS) (Penicillium brasilianum).